The chain runs to 388 residues: F-box/kelch-repeat protein At3g17530 (388 aa).

The F-box domain occupies 1-50 (MMISDLPHDLESEILSRVPAKSLAKWKTTCKRWYALFRDPSFVKKNFDKA). 2 Kelch repeats span residues 163-208 (CCYY…VSLK) and 336-383 (RIYI…AEEN).

The chain is F-box/kelch-repeat protein At3g17530 from Arabidopsis thaliana (Mouse-ear cress).